The chain runs to 370 residues: Developmentally-regulated GTP-binding protein 1 homolog (370 aa).

An OBG-type G domain is found at A65–K292. GTP contacts are provided by residues G71 to S78, D117 to I121, and N250 to D253. The TGS domain occupies K292–K369.

It belongs to the TRAFAC class OBG-HflX-like GTPase superfamily. OBG GTPase family.

The chain is Developmentally-regulated GTP-binding protein 1 homolog (drg1) from Dictyostelium discoideum (Social amoeba).